The sequence spans 463 residues: L-seryl-tRNA(Sec) selenium transferase (463 aa).

Lys295 carries the N6-(pyridoxal phosphate)lysine modification.

It belongs to the SelA family. In terms of assembly, homodecamer; pentamer of dimers. Binds only one seryl-tRNA(Sec) per dimer. Pyridoxal 5'-phosphate is required as a cofactor.

The protein resides in the cytoplasm. It carries out the reaction L-seryl-tRNA(Sec) + selenophosphate + H(+) = L-selenocysteinyl-tRNA(Sec) + phosphate. The protein operates within aminoacyl-tRNA biosynthesis; selenocysteinyl-tRNA(Sec) biosynthesis; selenocysteinyl-tRNA(Sec) from L-seryl-tRNA(Sec) (bacterial route): step 1/1. Its function is as follows. Converts seryl-tRNA(Sec) to selenocysteinyl-tRNA(Sec) required for selenoprotein biosynthesis. The polypeptide is L-seryl-tRNA(Sec) selenium transferase (Shigella boydii serotype 18 (strain CDC 3083-94 / BS512)).